Reading from the N-terminus, the 331-residue chain is Glycerol-3-phosphate dehydrogenase [NAD(P)+] (331 aa).

Ser11, Phe12, Arg32, and Lys106 together coordinate NADPH. The sn-glycerol 3-phosphate site is built by Lys106, Gly134, and Ser136. Ala138 provides a ligand contact to NADPH. Residues Lys189, Asp242, Ser252, Arg253, and Asn254 each coordinate sn-glycerol 3-phosphate. Lys189 (proton acceptor) is an active-site residue. Arg253 contributes to the NADPH binding site. Residues Val277 and Glu279 each coordinate NADPH.

This sequence belongs to the NAD-dependent glycerol-3-phosphate dehydrogenase family.

The protein resides in the cytoplasm. The enzyme catalyses sn-glycerol 3-phosphate + NAD(+) = dihydroxyacetone phosphate + NADH + H(+). The catalysed reaction is sn-glycerol 3-phosphate + NADP(+) = dihydroxyacetone phosphate + NADPH + H(+). The protein operates within membrane lipid metabolism; glycerophospholipid metabolism. Its function is as follows. Catalyzes the reduction of the glycolytic intermediate dihydroxyacetone phosphate (DHAP) to sn-glycerol 3-phosphate (G3P), the key precursor for phospholipid synthesis. The protein is Glycerol-3-phosphate dehydrogenase [NAD(P)+] of Clostridium perfringens (strain ATCC 13124 / DSM 756 / JCM 1290 / NCIMB 6125 / NCTC 8237 / Type A).